A 275-amino-acid polypeptide reads, in one-letter code: Lectin (275 aa).

Residues 1-30 (MASLQTQMISFYLIFLSILLTTIFFFKVNS) form the signal peptide. D-glucose contacts are provided by Asp-111 and Gly-129. The Mn(2+) site is built by Glu-149 and Asp-151. The Ca(2+) site is built by Asp-151, Phe-153, Asn-155, and Asp-159. Asp-159 and His-166 together coordinate Mn(2+). The propeptide occupies 211–217 (NSLEEEN). The D-glucose site is built by Gly-246 and Ala-247. A propeptide spanning residues 270-275 (KQAADA) is cleaved from the precursor.

The protein belongs to the leguminous lectin family. As to quaternary structure, heterotetramer of two alpha and two beta chains. The mature form consists of two chains, alpha and beta, produced by cleavage of the immature protein. These remain cleaved, yet fold together to form one subunit.

In terms of biological role, D-mannose specific lectin. This chain is Lectin, found in Lens culinaris (Lentil).